Consider the following 329-residue polypeptide: Glycerol-3-phosphate dehydrogenase [NAD(P)+] (329 aa).

NADPH contacts are provided by Tyr-14, Arg-34, and Lys-108. The sn-glycerol 3-phosphate site is built by Lys-108, Gly-137, and Ser-139. Residue Ala-141 participates in NADPH binding. Sn-glycerol 3-phosphate contacts are provided by Lys-192, Asp-245, Ser-255, Arg-256, and Asn-257. Catalysis depends on Lys-192, which acts as the Proton acceptor. Residue Arg-256 participates in NADPH binding. NADPH-binding residues include Ile-280 and Glu-282.

Belongs to the NAD-dependent glycerol-3-phosphate dehydrogenase family.

Its subcellular location is the cytoplasm. It carries out the reaction sn-glycerol 3-phosphate + NAD(+) = dihydroxyacetone phosphate + NADH + H(+). The catalysed reaction is sn-glycerol 3-phosphate + NADP(+) = dihydroxyacetone phosphate + NADPH + H(+). It participates in membrane lipid metabolism; glycerophospholipid metabolism. Its function is as follows. Catalyzes the reduction of the glycolytic intermediate dihydroxyacetone phosphate (DHAP) to sn-glycerol 3-phosphate (G3P), the key precursor for phospholipid synthesis. This Wigglesworthia glossinidia brevipalpis protein is Glycerol-3-phosphate dehydrogenase [NAD(P)+].